A 154-amino-acid polypeptide reads, in one-letter code: Lipoprotein signal peptidase (154 aa).

2 helical membrane-spanning segments follow: residues 55–75 (GHMW…IYIM) and 84–104 (LFSI…IDRV). Active-site residues include Asp111 and Asp129. Residues 124 to 144 (IFNVADAALSVGVVLMLVYVF) traverse the membrane as a helical segment.

It belongs to the peptidase A8 family.

It is found in the cell membrane. It catalyses the reaction Release of signal peptides from bacterial membrane prolipoproteins. Hydrolyzes -Xaa-Yaa-Zaa-|-(S,diacylglyceryl)Cys-, in which Xaa is hydrophobic (preferably Leu), and Yaa (Ala or Ser) and Zaa (Gly or Ala) have small, neutral side chains.. The protein operates within protein modification; lipoprotein biosynthesis (signal peptide cleavage). Its function is as follows. This protein specifically catalyzes the removal of signal peptides from prolipoproteins. This Listeria monocytogenes serotype 4b (strain CLIP80459) protein is Lipoprotein signal peptidase.